The primary structure comprises 59 residues: Potassium channel toxin alpha-KTx 4.5 (59 aa).

The first 22 residues, 1 to 22, serve as a signal peptide directing secretion; it reads MKAFYGVLIIFILISMLDLSQQ. Disulfide bonds link cysteine 29–cysteine 50, cysteine 35–cysteine 55, and cysteine 39–cysteine 57. The interval 48–55 is interaction with Ca(2+)-activated K(+) channels; the sequence is GKCMNGKC.

As to expression, expressed by the venom gland.

It localises to the secreted. Inhibits with low potency Kv1.1/KCNA1, Kv1.2/KCNA2, Kv1.3/KCNA3 and Kv11.1/KCNH2/ERG1 voltage-gated potassium channels. In Tityus costatus (Brazilian scorpion), this protein is Potassium channel toxin alpha-KTx 4.5.